Here is a 233-residue protein sequence, read N- to C-terminus: Biosynthetic peptidoglycan transglycosylase (233 aa).

The chain crosses the membrane as a helical span at residues 8–28 (LIALPVGIFIFFNAYVYGNII).

This sequence belongs to the glycosyltransferase 51 family.

The protein resides in the cell inner membrane. It carries out the reaction [GlcNAc-(1-&gt;4)-Mur2Ac(oyl-L-Ala-gamma-D-Glu-L-Lys-D-Ala-D-Ala)](n)-di-trans,octa-cis-undecaprenyl diphosphate + beta-D-GlcNAc-(1-&gt;4)-Mur2Ac(oyl-L-Ala-gamma-D-Glu-L-Lys-D-Ala-D-Ala)-di-trans,octa-cis-undecaprenyl diphosphate = [GlcNAc-(1-&gt;4)-Mur2Ac(oyl-L-Ala-gamma-D-Glu-L-Lys-D-Ala-D-Ala)](n+1)-di-trans,octa-cis-undecaprenyl diphosphate + di-trans,octa-cis-undecaprenyl diphosphate + H(+). The protein operates within cell wall biogenesis; peptidoglycan biosynthesis. Functionally, peptidoglycan polymerase that catalyzes glycan chain elongation from lipid-linked precursors. This Neisseria meningitidis serogroup C / serotype 2a (strain ATCC 700532 / DSM 15464 / FAM18) protein is Biosynthetic peptidoglycan transglycosylase.